Reading from the N-terminus, the 468-residue chain is Protein maelstrom 2 (468 aa).

The HMG box DNA-binding region spans 2–69 (PPKKHSGFMM…LTRVKKERLN (68 aa)). Residues 374 to 393 (KEDSPTVLSPASSRRSLASS) form a disordered region. Low complexity predominate over residues 381–393 (LSPASSRRSLASS).

This sequence belongs to the maelstrom family.

The protein resides in the cytoplasm. It localises to the nucleus. Involved both in the piRNA and miRNA metabolic processes. As a component of the meiotic nuage, plays a central role during oogenesis by repressing transposable elements and preventing their mobilization, which is essential for the germline integrity. Repression of transposable elements is mediated via the piRNA metabolic process, which mediates the repression of transposable elements during meiosis by forming complexes composed of piRNAs and Piwi proteins and governs the repression of transposons. As a nuclear component, it is required for proper differentiation in the germline stem cell (GSC) lineage by repressing microRNA-7 (miR-7), thereby acting as an indirect regulator of bag-of-marbles (Bam). Acts by binding to the promoter of miR-7 gene and repressing its expression; miR-7 repression alleviates the Bam repression by miR-7, thereby allowing differentiation in the germline stem cell (GSC) lineage. This Drosophila ananassae (Fruit fly) protein is Protein maelstrom 2 (mael2).